A 427-amino-acid polypeptide reads, in one-letter code: Serine--tRNA ligase (427 aa).

Residue 231–233 (TAE) coordinates L-serine. 262–264 (RSE) provides a ligand contact to ATP. Residue E285 coordinates L-serine. 349–352 (EISS) is a binding site for ATP. Position 385 (S385) interacts with L-serine.

This sequence belongs to the class-II aminoacyl-tRNA synthetase family. Type-1 seryl-tRNA synthetase subfamily. In terms of assembly, homodimer. The tRNA molecule binds across the dimer.

The protein resides in the cytoplasm. It carries out the reaction tRNA(Ser) + L-serine + ATP = L-seryl-tRNA(Ser) + AMP + diphosphate + H(+). The enzyme catalyses tRNA(Sec) + L-serine + ATP = L-seryl-tRNA(Sec) + AMP + diphosphate + H(+). The protein operates within aminoacyl-tRNA biosynthesis; selenocysteinyl-tRNA(Sec) biosynthesis; L-seryl-tRNA(Sec) from L-serine and tRNA(Sec): step 1/1. Functionally, catalyzes the attachment of serine to tRNA(Ser). Is also able to aminoacylate tRNA(Sec) with serine, to form the misacylated tRNA L-seryl-tRNA(Sec), which will be further converted into selenocysteinyl-tRNA(Sec). This chain is Serine--tRNA ligase, found in Rhizobium leguminosarum bv. trifolii (strain WSM2304).